The chain runs to 388 residues: tRNA-specific 2-thiouridylase MnmA (388 aa).

Residues 26–33 (GLSGGVDS) and L52 contribute to the ATP site. The Nucleophile role is filled by C113. A disulfide bridge connects residues C113 and C223. G138 serves as a coordination point for ATP. The tract at residues 173–175 (KDQ) is interaction with tRNA. C223 acts as the Cysteine persulfide intermediate in catalysis. Positions 328 to 329 (RY) are interaction with tRNA.

It belongs to the MnmA/TRMU family.

Its subcellular location is the cytoplasm. It carries out the reaction S-sulfanyl-L-cysteinyl-[protein] + uridine(34) in tRNA + AH2 + ATP = 2-thiouridine(34) in tRNA + L-cysteinyl-[protein] + A + AMP + diphosphate + H(+). Functionally, catalyzes the 2-thiolation of uridine at the wobble position (U34) of tRNA, leading to the formation of s(2)U34. The chain is tRNA-specific 2-thiouridylase MnmA from Prochlorococcus marinus (strain NATL2A).